Here is a 466-residue protein sequence, read N- to C-terminus: UDP-N-acetylmuramoylalanine--D-glutamate ligase (466 aa).

121–127 contacts ATP; it reads GTNGKST.

Belongs to the MurCDEF family.

The protein localises to the cytoplasm. The catalysed reaction is UDP-N-acetyl-alpha-D-muramoyl-L-alanine + D-glutamate + ATP = UDP-N-acetyl-alpha-D-muramoyl-L-alanyl-D-glutamate + ADP + phosphate + H(+). It functions in the pathway cell wall biogenesis; peptidoglycan biosynthesis. Functionally, cell wall formation. Catalyzes the addition of glutamate to the nucleotide precursor UDP-N-acetylmuramoyl-L-alanine (UMA). This is UDP-N-acetylmuramoylalanine--D-glutamate ligase from Nitrobacter winogradskyi (strain ATCC 25391 / DSM 10237 / CIP 104748 / NCIMB 11846 / Nb-255).